Reading from the N-terminus, the 254-residue chain is Thiazole synthase (254 aa).

Lys-95 acts as the Schiff-base intermediate with DXP in catalysis. 1-deoxy-D-xylulose 5-phosphate is bound by residues Gly-156, 182 to 183, and 204 to 205; these read AG and NT.

It belongs to the ThiG family. Homotetramer. Forms heterodimers with either ThiH or ThiS.

It localises to the cytoplasm. The catalysed reaction is [ThiS sulfur-carrier protein]-C-terminal-Gly-aminoethanethioate + 2-iminoacetate + 1-deoxy-D-xylulose 5-phosphate = [ThiS sulfur-carrier protein]-C-terminal Gly-Gly + 2-[(2R,5Z)-2-carboxy-4-methylthiazol-5(2H)-ylidene]ethyl phosphate + 2 H2O + H(+). It functions in the pathway cofactor biosynthesis; thiamine diphosphate biosynthesis. In terms of biological role, catalyzes the rearrangement of 1-deoxy-D-xylulose 5-phosphate (DXP) to produce the thiazole phosphate moiety of thiamine. Sulfur is provided by the thiocarboxylate moiety of the carrier protein ThiS. In vitro, sulfur can be provided by H(2)S. This chain is Thiazole synthase, found in Shewanella baltica (strain OS223).